Reading from the N-terminus, the 555-residue chain is Glucose-6-phosphate isomerase (555 aa).

Glutamate 356 serves as the catalytic Proton donor. Residues histidine 387 and lysine 515 contribute to the active site.

This sequence belongs to the GPI family.

It is found in the cytoplasm. It catalyses the reaction alpha-D-glucose 6-phosphate = beta-D-fructose 6-phosphate. It functions in the pathway carbohydrate biosynthesis; gluconeogenesis. The protein operates within carbohydrate degradation; glycolysis; D-glyceraldehyde 3-phosphate and glycerone phosphate from D-glucose: step 2/4. Functionally, catalyzes the reversible isomerization of glucose-6-phosphate to fructose-6-phosphate. The polypeptide is Glucose-6-phosphate isomerase (Desulforapulum autotrophicum (strain ATCC 43914 / DSM 3382 / VKM B-1955 / HRM2) (Desulfobacterium autotrophicum)).